Reading from the N-terminus, the 313-residue chain is Ribosomal RNA small subunit methyltransferase H (313 aa).

S-adenosyl-L-methionine contacts are provided by residues 35–37 (GGH), aspartate 55, phenylalanine 80, aspartate 102, and glutamine 109.

This sequence belongs to the methyltransferase superfamily. RsmH family.

The protein localises to the cytoplasm. The enzyme catalyses cytidine(1402) in 16S rRNA + S-adenosyl-L-methionine = N(4)-methylcytidine(1402) in 16S rRNA + S-adenosyl-L-homocysteine + H(+). Its function is as follows. Specifically methylates the N4 position of cytidine in position 1402 (C1402) of 16S rRNA. The chain is Ribosomal RNA small subunit methyltransferase H from Shewanella sp. (strain MR-7).